Here is a 797-residue protein sequence, read N- to C-terminus: Probable exo-1,4-beta-xylosidase bxlB (797 aa).

Positions methionine 1–alanine 21 are cleaved as a signal peptide. N-linked (GlcNAc...) asparagine glycans are attached at residues asparagine 86 and asparagine 126. Residue aspartate 312 is part of the active site. Asparagine 364, asparagine 431, asparagine 442, asparagine 483, asparagine 644, and asparagine 787 each carry an N-linked (GlcNAc...) asparagine glycan.

This sequence belongs to the glycosyl hydrolase 3 family.

Its subcellular location is the secreted. It catalyses the reaction Hydrolysis of (1-&gt;4)-beta-D-xylans, to remove successive D-xylose residues from the non-reducing termini.. The protein operates within glycan degradation; xylan degradation. Functionally, xylan 1,4-beta-xylosidase involved in the hydrolysis of xylan, a major structural heterogeneous polysaccharide found in plant biomass representing the second most abundant polysaccharide in the biosphere, after cellulose. The sequence is that of Probable exo-1,4-beta-xylosidase bxlB (bxlB) from Aspergillus oryzae (strain ATCC 42149 / RIB 40) (Yellow koji mold).